Reading from the N-terminus, the 135-residue chain is MEVKTFAFLQIAVFIALGIQIFAAVTAAADANEEVFTVEYCGMNCTQKSDGTWTECSGKNKDCRCYHESDAREGLCLSTEYTDFSQFETPSNSDLEAATPRPRKTLYPVRNPHGPKTRGLGYDKRILRDRVKFLI.

The first 31 residues, 1-31 (MEVKTFAFLQIAVFIALGIQIFAAVTAAADA), serve as a signal peptide directing secretion. 3 disulfide bridges follow: cysteine 41/cysteine 63, cysteine 45/cysteine 65, and cysteine 56/cysteine 76. Asparagine 44 carries N-linked (GlcNAc...) asparagine glycosylation. Residues 88 to 112 (ETPSNSDLEAATPRPRKTLYPVRNP) form a disordered region.

It is found in the secreted. In terms of biological role, salivary chemokine-binding protein which binds to host chemokine CXCL1. The sequence is that of Evasin P1134 from Ixodes ricinus (Common tick).